Reading from the N-terminus, the 510-residue chain is MFIESFKVESPNVKYTENEIHSVYDYETTEVVHENVNGAYQWIVKPKVVKYDFKTDTRVPKLGVMLVGWGGNNGSTLTAGVIANKEGISWATKDKVQQANYFGSLTQASSIRVGSFNGEEMYAPFKSLVPMVNPDDVVFGGWDISDMNLADAMGRAKVLDIDLQKQLRPYMENIVPLPGIYDPDFIAANQGSRANNVIKGTKKEQVDQIIKDMREFKEKNKVDKVVVLWTANTERYSNVIVGLNDTMENLMNSVDRDESEISPSTLYAIACVLEGIPFINGSPQNTFVPGLIDLAIKNNVLIGGDDFKSGQTKMKSVLVDFLVGAGIKPTSIVSYNHLGNNDGMNLSAPQTFRSKEISKSNVVDDMVASNGILFEPGEHPDHVVVIKYVPYVADSKRAMDEYTSEIFMGGKNTIVMHNTCEDSLLAAPIILDLVLLAEISTRIQFKSEKEGKFHSFHPVATKLSYLTKAPLVPPGTPVVNALSKQRAMLENILRACVGLAPENNMILEYK.

Positions 70, 71, 72, 73, 143, 180, 190, 193, 230, 231, 232, 233, 281, 282, 306, 309, 340, 341, 342, 355, 393, 394, 422, and 423 each coordinate NAD(+).

It belongs to the myo-inositol 1-phosphate synthase family. The cofactor is NAD(+).

The protein resides in the cytoplasm. Its subcellular location is the cytosol. The protein localises to the nucleus. It catalyses the reaction D-glucose 6-phosphate = 1D-myo-inositol 3-phosphate. It participates in polyol metabolism; myo-inositol biosynthesis; myo-inositol from D-glucose 6-phosphate: step 1/2. In terms of biological role, key enzyme in myo-inositol biosynthesis pathway that catalyzes the conversion of glucose 6-phosphate to 1-myo-inositol 1-phosphate in a NAD-dependent manner. The polypeptide is Inositol-3-phosphate synthase (Brassica napus (Rape)).